We begin with the raw amino-acid sequence, 59 residues long: MGKKKGKGAVELISLICEETGIRNYTTTKNRRNKQEKLELMKYCPKLRKHTLHKEGKIK.

Belongs to the bacterial ribosomal protein bL33 family.

The chain is Large ribosomal subunit protein bL33 from Borreliella afzelii (strain PKo) (Borrelia afzelii).